The following is an 87-amino-acid chain: Acyl-CoA-binding protein (87 aa).

Ser2 carries the N-acetylserine modification. The ACB domain maps to 2–87; that stretch reads SQAEFEKAAE…VEELKKKYGI (86 aa). Residue Lys8 is modified to N6-acetyllysine; alternate. Lys8 carries the post-translational modification N6-succinyllysine; alternate. An acyl-CoA is bound at residue Lys14. The residue at position 17 (Lys17) is an N6-succinyllysine. The residue at position 19 (Lys19) is an N6-acetyllysine. Tyr29 is modified (phosphotyrosine). Residues 29–33, Lys51, Lys55, and Tyr74 each bind an acyl-CoA; that span reads YSHYK. At Lys51 the chain carries N6-acetyllysine. Lys55 carries the post-translational modification N6-acetyllysine; alternate. An N6-succinyllysine; alternate modification is found at Lys55. An N6-(2-hydroxyisobutyryl)lysine; alternate modification is found at Lys55. Lys55 carries the post-translational modification N6-malonyllysine; alternate. Lys77 carries the N6-acetyllysine; alternate modification. Position 77 is an N6-succinyllysine; alternate (Lys77).

Belongs to the ACBP family. In terms of assembly, monomer.

It is found in the endoplasmic reticulum. The protein localises to the golgi apparatus. Its function is as follows. Binds medium- and long-chain acyl-CoA esters with very high affinity and may function as an intracellular carrier of acyl-CoA esters. It is also able to displace diazepam from the benzodiazepine (BZD) recognition site located on the GABA type A receptor. It is therefore possible that this protein also acts as a neuropeptide to modulate the action of the GABA receptor. In terms of biological role, DBI(32-86) has antibacterial properties. The protein is Acyl-CoA-binding protein (DBI) of Sus scrofa (Pig).